A 316-amino-acid polypeptide reads, in one-letter code: Acetyl-coenzyme A carboxylase carboxyl transferase subunit beta (316 aa).

In terms of domain architecture, CoA carboxyltransferase N-terminal spans 39–308 (LWHKCSKCGV…TPPMVLWETM (270 aa)). Zn(2+) contacts are provided by cysteine 43, cysteine 46, cysteine 62, and cysteine 65. A C4-type zinc finger spans residues 43 to 65 (CSKCGVLTYTKDLRANQMVCVEC).

It belongs to the AccD/PCCB family. As to quaternary structure, acetyl-CoA carboxylase is a heterohexamer composed of biotin carboxyl carrier protein (AccB), biotin carboxylase (AccC) and two subunits each of ACCase subunit alpha (AccA) and ACCase subunit beta (AccD). Requires Zn(2+) as cofactor.

It localises to the cytoplasm. It catalyses the reaction N(6)-carboxybiotinyl-L-lysyl-[protein] + acetyl-CoA = N(6)-biotinyl-L-lysyl-[protein] + malonyl-CoA. Its pathway is lipid metabolism; malonyl-CoA biosynthesis; malonyl-CoA from acetyl-CoA: step 1/1. Component of the acetyl coenzyme A carboxylase (ACC) complex. Biotin carboxylase (BC) catalyzes the carboxylation of biotin on its carrier protein (BCCP) and then the CO(2) group is transferred by the transcarboxylase to acetyl-CoA to form malonyl-CoA. This Nostoc sp. (strain PCC 7120 / SAG 25.82 / UTEX 2576) protein is Acetyl-coenzyme A carboxylase carboxyl transferase subunit beta.